The following is a 602-amino-acid chain: MFS-type efflux transporter pyiT (602 aa).

Residues 1–33 (MEKAKDSLPTTGDPVPSQGTINPVDETGGSASD) form a disordered region. 7 consecutive transmembrane segments (helical) span residues 43 to 63 (FWFT…EGSV), 123 to 143 (WLTI…GGAT), 156 to 176 (GLGS…LLPL), 185 to 205 (IIFM…GILV), 212 to 232 (WVFY…FFFL), 251 to 271 (FFGN…LTYG), and 282 to 302 (IIVS…FEAS). N-linked (GlcNAc...) asparagine glycosylation occurs at asparagine 317. 6 consecutive transmembrane segments (helical) span residues 325–345 (IATF…PLYF), 357–377 (GVML…GGAL), 386–406 (NIHF…TILN), 410–430 (SLAV…VPTA), 451–471 (TFAF…AAIF), and 524–544 (LERV…VIFL). The segment covering 564–585 (IPQTAADNSASRPNTINDTASQ) has biased composition (polar residues). The segment at 564 to 602 (IPQTAADNSASRPNTINDTASQAPILKQRRSTNQERETV) is disordered. Asparagine 580 carries an N-linked (GlcNAc...) asparagine glycan.

The protein belongs to the major facilitator superfamily.

It localises to the cell membrane. Functionally, MFS-type efflux transporter; part of the gene cluster that mediates the biosynthesis of the mycotoxin pyrichalasin H, a tyrosine-derived cytochalasan that inhibits the growth of rice seedlings, but also inhibits lymphocyte capping and actin polymerization and alters cell morphology. Pyrichalasin H is indicated as the responsible agent for the genus-specific pathogenicity of M.grisea toward crabgrass. PyiT might be involved in the excretion of pyrichalasin H. The sequence is that of MFS-type efflux transporter pyiT from Pyricularia grisea (Crabgrass-specific blast fungus).